We begin with the raw amino-acid sequence, 1388 residues long: DNA-directed RNA polymerase subunit beta (1388 aa).

Belongs to the RNA polymerase beta chain family. The RNAP catalytic core consists of 2 alpha, 1 beta, 1 beta' and 1 omega subunit. When a sigma factor is associated with the core the holoenzyme is formed, which can initiate transcription.

It carries out the reaction RNA(n) + a ribonucleoside 5'-triphosphate = RNA(n+1) + diphosphate. Functionally, DNA-dependent RNA polymerase catalyzes the transcription of DNA into RNA using the four ribonucleoside triphosphates as substrates. The protein is DNA-directed RNA polymerase subunit beta of Xylella fastidiosa (strain 9a5c).